The following is a 161-amino-acid chain: Large ribosomal subunit protein uL10 (161 aa).

The protein belongs to the universal ribosomal protein uL10 family. In terms of assembly, part of the ribosomal stalk of the 50S ribosomal subunit. The N-terminus interacts with L11 and the large rRNA to form the base of the stalk. The C-terminus forms an elongated spine to which L12 dimers bind in a sequential fashion forming a multimeric L10(L12)X complex.

In terms of biological role, forms part of the ribosomal stalk, playing a central role in the interaction of the ribosome with GTP-bound translation factors. This Buchnera aphidicola subsp. Cinara cedri (strain Cc) protein is Large ribosomal subunit protein uL10.